The following is a 179-amino-acid chain: Large ribosomal subunit protein uL5 (179 aa).

It belongs to the universal ribosomal protein uL5 family. As to quaternary structure, part of the 50S ribosomal subunit; part of the 5S rRNA/L5/L18/L25 subcomplex. Contacts the 5S rRNA and the P site tRNA. Forms a bridge to the 30S subunit in the 70S ribosome.

Its function is as follows. This is one of the proteins that bind and probably mediate the attachment of the 5S RNA into the large ribosomal subunit, where it forms part of the central protuberance. In the 70S ribosome it contacts protein S13 of the 30S subunit (bridge B1b), connecting the 2 subunits; this bridge is implicated in subunit movement. Contacts the P site tRNA; the 5S rRNA and some of its associated proteins might help stabilize positioning of ribosome-bound tRNAs. The chain is Large ribosomal subunit protein uL5 from Bordetella petrii (strain ATCC BAA-461 / DSM 12804 / CCUG 43448).